A 63-amino-acid polypeptide reads, in one-letter code: U7-theraphotoxin-Cg1a (63 aa).

Residues 1–21 (MKTSILFVIFGLALLFALSVA) form the signal peptide. Positions 22-31 (IEMEEEETDR) are excised as a propeptide. 3 cysteine pairs are disulfide-bonded: cysteine 33–cysteine 47, cysteine 40–cysteine 52, and cysteine 46–cysteine 59.

In terms of tissue distribution, expressed by the venom gland.

It is found in the secreted. Its function is as follows. Inhibits preferentially tetrodotoxin-insensitive sodium currents (Nav) on rat cardiac myocytes (IC(50) is 0.26 uM) and has weaker inhibition activity toward tetrodotoxin-sensitive sodium currents on rat dorsal root ganglion (DRG) sensory neurons (IC(50) is 0.83 uM) and on cockroach dorsal unpaired median (DUM) neurons (IC(50) is 1.19 uM). Has no significant effect on potassium currents on DRG neurons. The sequence is that of U7-theraphotoxin-Cg1a from Chilobrachys guangxiensis (Chinese earth tiger tarantula).